We begin with the raw amino-acid sequence, 268 residues long: Tryptophan synthase alpha chain (268 aa).

Catalysis depends on proton acceptor residues E49 and D60.

It belongs to the TrpA family. As to quaternary structure, tetramer of two alpha and two beta chains.

It carries out the reaction (1S,2R)-1-C-(indol-3-yl)glycerol 3-phosphate + L-serine = D-glyceraldehyde 3-phosphate + L-tryptophan + H2O. It participates in amino-acid biosynthesis; L-tryptophan biosynthesis; L-tryptophan from chorismate: step 5/5. In terms of biological role, the alpha subunit is responsible for the aldol cleavage of indoleglycerol phosphate to indole and glyceraldehyde 3-phosphate. This is Tryptophan synthase alpha chain from Escherichia coli O157:H7.